A 423-amino-acid polypeptide reads, in one-letter code: MKLCALFAGAVISTSAVAASWEYAWPEEWHQEWPLDEQGPDAWSSSECTVSRLDAFEMEKGRKPVFFSTDPLDDPEAPKMLPLNSTGGEQWEFDGVSEDGQMAFCFGFYRDPNYAILGTGNLRLSAEFSRPNKTRFVRVDYPSSSTVTSCPWGTRGVWKGADYSYTFEVTRDIKVARIGVDAPDLKGSVVMRSVMPPRYPDGSTYPNKEASTEVVPYFRWLEAIPAADVRVDVVMDGQPYRWSGLGGHERLWTAFSWFTCLQAMTAVRVKAGPFAAVHGSFVSAIDKGLYRPSTVLAENDEVIFSTTLHEPSDTEDYAVFTKTYGGRVSGNLKEKATGYELVMVSPSAKKQWSFSITNEAIGFEYMLGEGVGGTGFSGRAVGGSIGLKQYFGPSFAETLEFPKRSYLFKSNYVDAVPEEKGEL.

Residues 1–18 (MKLCALFAGAVISTSAVA) form the signal peptide. Asn-84 and Asn-132 each carry an N-linked (GlcNAc...) asparagine glycan.

It belongs to the Diels-Alderase family.

The protein operates within secondary metabolite biosynthesis. Its function is as follows. Diels-Alderase; part of the gene cluster that mediates the biosynthesis of chaetoglobosin A which has a unique inhibitory activity against actin polymerization in mammalian cells. Chaetoglobosin A and its intermediates are involved in the morphological differentiation of C.globosum. The first step of the pathway is the synthesis of prochaetoglobosin I via condensation of one acetyl-CoA, 8 malonyl-CoA, and a L-tryptophan molecule by the PKS-NRPS hybrid synthetase cheA, followed by reduction of backbone double bond to install desired geometry by the enoyl reductase cheB. Further multiple oxidation steps performed by the cytochrome P450 monooxygenases cheE and cheG, as well as by the FAD-linked oxidoreductase cheF, lead to the formation of chaetoglobosin A. Depending on the order of action of these reductases, distinct intermediates can be identified. Within the pathway, the cytochrome P450 monooxygenase cheE catalyzes a stereospecific epoxidation on prochaetoglobosin I, cytoglobosin D, and chaetoglobosin J intermediates. The FAD-linked oxidoreductase cheF performs dehydrogenation of the C-20 hydroxyl groups in the 20-dihyrochaetoglobosin A and cytoglobosin D intermediates. Finally, the cytochrome P450 monooxygenase cheG can catalyze the stereospecific dihydroxylation of prochaetoglobosin I and prochaetoglobosin IV at C-19 and C-20, respectively. The Diels-Alderase cheD may play a role in the post-PKS-NRPS biosynthetic steps catalyzing Diels-Alder cyclization. This chain is Diels-Alderase cheD, found in Chaetomium globosum (strain ATCC 6205 / CBS 148.51 / DSM 1962 / NBRC 6347 / NRRL 1970) (Soil fungus).